Consider the following 343-residue polypeptide: Protease HtpX homolog (343 aa).

2 helical membrane passes run 7-24 (TMLL…GYLV) and 29-46 (GMVV…FSYW). His-130 is a binding site for Zn(2+). Glu-131 is a catalytic residue. Position 134 (His-134) interacts with Zn(2+). 2 helical membrane passes run 145–165 (LTAT…LMGM) and 177–197 (GAGM…AMLV). Glu-206 lines the Zn(2+) pocket. The interval 308–343 (NLEDEDLNPEAQNGFTHNQKKKTVRRGKDRPTWLRH) is disordered. The span at 325 to 335 (NQKKKTVRRGK) shows a compositional bias: basic residues.

This sequence belongs to the peptidase M48B family. Zn(2+) serves as cofactor.

The protein localises to the cell inner membrane. This Bartonella bacilliformis (strain ATCC 35685 / KC583 / Herrer 020/F12,63) protein is Protease HtpX homolog.